The primary structure comprises 251 residues: Triosephosphate isomerase (251 aa).

A substrate-binding site is contributed by 9–11 (NWK). Residue histidine 95 is the Electrophile of the active site. Glutamate 167 acts as the Proton acceptor in catalysis. Substrate contacts are provided by residues glycine 173, serine 212, and 233–234 (GG).

Belongs to the triosephosphate isomerase family. As to quaternary structure, homodimer.

The protein localises to the cytoplasm. The catalysed reaction is D-glyceraldehyde 3-phosphate = dihydroxyacetone phosphate. Its pathway is carbohydrate biosynthesis; gluconeogenesis. It functions in the pathway carbohydrate degradation; glycolysis; D-glyceraldehyde 3-phosphate from glycerone phosphate: step 1/1. In terms of biological role, involved in the gluconeogenesis. Catalyzes stereospecifically the conversion of dihydroxyacetone phosphate (DHAP) to D-glyceraldehyde-3-phosphate (G3P). The sequence is that of Triosephosphate isomerase from Pseudomonas fluorescens (strain ATCC BAA-477 / NRRL B-23932 / Pf-5).